We begin with the raw amino-acid sequence, 367 residues long: RNA-binding protein 48 (367 aa).

The RRM domain maps to 46–124; that stretch reads QYLLIQGVPA…GLLHVCYAPE (79 aa). Residues 217 to 228 show a composition bias toward basic and acidic residues; that stretch reads PVDRASDSSKDG. 3 disordered regions span residues 217–243, 277–303, and 339–367; these read PVDR…HNGS, RTTQ…TNPS, and EVIS…RRRI. Basic and acidic residues predominate over residues 347–356; sequence PPEDKPEDVN.

This sequence belongs to the RBM48 family. In terms of assembly, component of the minor spliceosome. Within this complex, interacts with ARMC7 and PRPF8/PRP8.

Its function is as follows. As a component of the minor spliceosome, involved in the splicing of U12-type introns in pre-mRNAs. This is RNA-binding protein 48 (RBM48) from Pongo abelii (Sumatran orangutan).